The chain runs to 525 residues: Probable histidine ammonia-lyase (525 aa).

The 5-imidazolinone (Ala-Gly) cross-link spans 145 to 147 (ASG). 2,3-didehydroalanine (Ser) is present on serine 146.

The protein belongs to the PAL/histidase family. In terms of processing, contains an active site 4-methylidene-imidazol-5-one (MIO), which is formed autocatalytically by cyclization and dehydration of residues Ala-Ser-Gly.

The protein localises to the cytoplasm. The catalysed reaction is L-histidine = trans-urocanate + NH4(+). It functions in the pathway amino-acid degradation; L-histidine degradation into L-glutamate; N-formimidoyl-L-glutamate from L-histidine: step 1/3. The sequence is that of Probable histidine ammonia-lyase from Halobacterium salinarum (strain ATCC 29341 / DSM 671 / R1).